Here is a 355-residue protein sequence, read N- to C-terminus: uncharacterized protein (355 aa).

The protein belongs to the serpin family. Poxviruses subfamily.

This is an uncharacterized protein from Vertebrata (FPV).